Consider the following 145-residue polypeptide: Basic phospholipase A2 S11-61 (145 aa).

Residues 1-19 (MYPVHLLVLLAVCVSLLGA) form the signal peptide. A propeptide spanning residues 20 to 27 (SNIPPQPL) is cleaved from the precursor. Cystine bridges form between Cys38–Cys98, Cys54–Cys144, Cys56–Cys72, Cys71–Cys125, Cys78–Cys118, Cys87–Cys111, and Cys105–Cys116. Residues Tyr55, Gly57, and Gly59 each coordinate Ca(2+). His75 is a catalytic residue. Ca(2+) is bound at residue Asp76. Asp119 is an active-site residue.

It belongs to the phospholipase A2 family. Group I subfamily. D49 sub-subfamily. It depends on Ca(2+) as a cofactor. In terms of tissue distribution, expressed by the venom gland.

It is found in the secreted. It carries out the reaction a 1,2-diacyl-sn-glycero-3-phosphocholine + H2O = a 1-acyl-sn-glycero-3-phosphocholine + a fatty acid + H(+). In terms of biological role, snake venom phospholipase A2 (PLA2) that inhibits collagen-induced platelet aggregation. PLA2 catalyzes the calcium-dependent hydrolysis of the 2-acyl groups in 3-sn-phosphoglycerides. This Austrelaps superbus (Lowland copperhead snake) protein is Basic phospholipase A2 S11-61.